The following is a 188-amino-acid chain: Deoxyuridine 5'-triphosphate nucleotidohydrolase (188 aa).

The interval 1–34 (MGEMTSGVDGHGSTKRTTSEAQKMDFNTDRGSAI) is disordered.

The protein belongs to the dUTPase family. Mg(2+) is required as a cofactor.

It carries out the reaction dUTP + H2O = dUMP + diphosphate + H(+). In terms of biological role, this enzyme is involved in nucleotide metabolism: it produces dUMP, the immediate precursor of thymidine nucleotides and it decreases the intracellular concentration of dUTP so that uracil cannot be incorporated into DNA. The protein is Deoxyuridine 5'-triphosphate nucleotidohydrolase (49) of Ictaluridae (bullhead catfishes).